A 98-amino-acid polypeptide reads, in one-letter code: Small ribosomal subunit protein uS17 (98 aa).

It belongs to the universal ribosomal protein uS17 family. In terms of assembly, part of the 30S ribosomal subunit.

Functionally, one of the primary rRNA binding proteins, it binds specifically to the 5'-end of 16S ribosomal RNA. This is Small ribosomal subunit protein uS17 from Leptothrix cholodnii (strain ATCC 51168 / LMG 8142 / SP-6) (Leptothrix discophora (strain SP-6)).